Consider the following 161-residue polypeptide: Cyclic pyranopterin monophosphate synthase (161 aa).

Substrate contacts are provided by residues 75–77 (LCH) and 113–114 (ME). Aspartate 128 is a catalytic residue.

The protein belongs to the MoaC family. In terms of assembly, homohexamer; trimer of dimers.

The enzyme catalyses (8S)-3',8-cyclo-7,8-dihydroguanosine 5'-triphosphate = cyclic pyranopterin phosphate + diphosphate. The protein operates within cofactor biosynthesis; molybdopterin biosynthesis. In terms of biological role, catalyzes the conversion of (8S)-3',8-cyclo-7,8-dihydroguanosine 5'-triphosphate to cyclic pyranopterin monophosphate (cPMP). The sequence is that of Cyclic pyranopterin monophosphate synthase from Cupriavidus pinatubonensis (strain JMP 134 / LMG 1197) (Cupriavidus necator (strain JMP 134)).